A 978-amino-acid chain; its full sequence is Receptor like protein 21 (978 aa).

The signal sequence occupies residues 1-27 (MLLAMEGKLFLCQYLIWVMLLLGQLHG). Residues 28 to 930 (CTSCIEKERE…EEDDKAAIDM (903 aa)) lie on the Extracellular side of the membrane. N-linked (GlcNAc...) asparagine glycans are attached at residues Asn-64, Asn-79, Asn-102, Asn-116, and Asn-155. 28 LRR repeats span residues 141-167 (LRNL…AATS), 169-189 (TTLI…GLKD), 190-213 (LTNL…LIHL), 214-237 (KKLK…ELQN), 238-262 (LINL…VFCK), 264-287 (KNLR…LGSL), 288-310 (KKLR…SFSS), 312-335 (ESLE…PLTN), 337-361 (TNLK…TWQP), 362-385 (NFQL…LLYQ), 386-409 (KKLR…LLTN), 410-432 (NPEL…PTMV), 433-455 (HNLQ…MDHA), 457-480 (PNLV…IGEM), 481-504 (KNIS…FVTG), 506-529 (VSIM…ETNF), 530-553 (PSLD…LSNS), 554-577 (TMLR…LFEF), 579-601 (YLDY…LLGM), 602-625 (PFLS…VDSE), 627-646 (GIYM…DTLL), 647-671 (KSVQ…DTQS), 673-693 (NILL…LCDL), 694-716 (SNVR…CLSN), 788-811 (LRLM…ELGD), 812-835 (LLKL…SFSK), 837-859 (IDVE…LLSS), and 860-885 (LTSL…QFNT). A glycan (N-linked (GlcNAc...) asparagine) is linked at Asn-204. Residue Asn-335 is glycosylated (N-linked (GlcNAc...) asparagine). N-linked (GlcNAc...) asparagine glycosylation is found at Asn-397 and Asn-420. Residues Asn-463, Asn-482, and Asn-492 are each glycosylated (N-linked (GlcNAc...) asparagine). The N-linked (GlcNAc...) asparagine glycan is linked to Asn-552. Residue Asn-636 is glycosylated (N-linked (GlcNAc...) asparagine). Residues Asn-681 and Asn-716 are each glycosylated (N-linked (GlcNAc...) asparagine). Asn-819 carries N-linked (GlcNAc...) asparagine glycosylation. The N-linked (GlcNAc...) asparagine glycan is linked to Asn-872. Residues 902-922 (TSRSCETNKSPEEADNGQEEE) are disordered. Residues 931-951 (MVFYFSTASIYVTALIGVLVL) traverse the membrane as a helical segment. Residues 952-978 (MCFDCPWRRAWLRIVDAFIASAKHVLP) are Cytoplasmic-facing.

Belongs to the RLP family.

The protein localises to the cell membrane. In Arabidopsis thaliana (Mouse-ear cress), this protein is Receptor like protein 21.